The following is a 279-amino-acid chain: ESX-1 secretion-associated protein EspG1 (279 aa).

This sequence belongs to the EspG family. As to quaternary structure, interacts specifically with ESX-1-dependent PE/PPE proteins.

The protein localises to the cytoplasm. Its function is as follows. Specific chaperone for cognate PE/PPE proteins. Plays an important role in preventing aggregation of PE/PPE dimers. This chain is ESX-1 secretion-associated protein EspG1, found in Mycobacterium marinum (strain ATCC BAA-535 / M).